The primary structure comprises 225 residues: Membrane protein (225 aa).

Residues 1-20 (MDNTTNCTLGTEQAVQLFKE) are Virion surface-facing. The chain crosses the membrane as a helical span at residues 21–41 (YNLFVTAFLLFLTILLQYGYA). The Intravirion segment spans residues 42 to 51 (TRNKVIYILK). Residues 52 to 72 (MIVLWCFWPLNIAVGAISCIY) form a helical membrane-spanning segment. Over 73 to 77 (PPNTG) the chain is Virion surface. A helical transmembrane segment spans residues 78 to 98 (GLVAAIILTVFACLSFIGYWI). At 99-225 (QSFRLFKRCR…VATGGSSLYT (127 aa)) the chain is on the intravirion side.

Belongs to the gammacoronaviruses M protein family. In terms of assembly, homomultimer. Interacts with envelope E protein in the budding compartment of the host cell, which is located between endoplasmic reticulum and the Golgi complex. Forms a complex with HE and S proteins. Interacts with nucleocapsid N protein. This interaction probably participates in RNA packaging into the virus.

It is found in the virion membrane. Its subcellular location is the host Golgi apparatus membrane. In terms of biological role, component of the viral envelope that plays a central role in virus morphogenesis and assembly via its interactions with other viral proteins. In Avian infectious bronchitis virus (strain 6/82) (IBV), this protein is Membrane protein.